Reading from the N-terminus, the 425-residue chain is Glutamate-1-semialdehyde 2,1-aminomutase (425 aa).

At Lys-265 the chain carries N6-(pyridoxal phosphate)lysine.

It belongs to the class-III pyridoxal-phosphate-dependent aminotransferase family. HemL subfamily. Homodimer. Requires pyridoxal 5'-phosphate as cofactor.

It localises to the cytoplasm. It carries out the reaction (S)-4-amino-5-oxopentanoate = 5-aminolevulinate. It functions in the pathway porphyrin-containing compound metabolism; protoporphyrin-IX biosynthesis; 5-aminolevulinate from L-glutamyl-tRNA(Glu): step 2/2. This is Glutamate-1-semialdehyde 2,1-aminomutase from Psychromonas ingrahamii (strain DSM 17664 / CCUG 51855 / 37).